The primary structure comprises 327 residues: Porphobilinogen deaminase (327 aa).

Cys-251 is modified (S-(dipyrrolylmethanemethyl)cysteine).

It belongs to the HMBS family. Dipyrromethane is required as a cofactor.

The catalysed reaction is 4 porphobilinogen + H2O = hydroxymethylbilane + 4 NH4(+). It functions in the pathway porphyrin-containing compound metabolism; protoporphyrin-IX biosynthesis; coproporphyrinogen-III from 5-aminolevulinate: step 2/4. Its function is as follows. Tetrapolymerization of the monopyrrole PBG into the hydroxymethylbilane pre-uroporphyrinogen in several discrete steps. The sequence is that of Porphobilinogen deaminase (HEM3) from Kluyveromyces lactis (strain ATCC 8585 / CBS 2359 / DSM 70799 / NBRC 1267 / NRRL Y-1140 / WM37) (Yeast).